Consider the following 344-residue polypeptide: Ketol-acid reductoisomerase (NADP(+)) (344 aa).

Residues 2–181 form the KARI N-terminal Rossmann domain; sequence EKIYYDADIS…GAGRAGILTT (180 aa). NADP(+)-binding positions include 25–28, R48, S52, and 82–85; these read YGSQ and DERQ. H107 is an active-site residue. Residue G133 coordinates NADP(+). A KARI C-terminal knotted domain is found at 182–327; that stretch reads TFREETETDL…RKLRSMMPFI (146 aa). 4 residues coordinate Mg(2+): D190, E194, E226, and E230. S251 lines the substrate pocket.

Belongs to the ketol-acid reductoisomerase family. Mg(2+) is required as a cofactor.

The catalysed reaction is (2R)-2,3-dihydroxy-3-methylbutanoate + NADP(+) = (2S)-2-acetolactate + NADPH + H(+). It catalyses the reaction (2R,3R)-2,3-dihydroxy-3-methylpentanoate + NADP(+) = (S)-2-ethyl-2-hydroxy-3-oxobutanoate + NADPH + H(+). It participates in amino-acid biosynthesis; L-isoleucine biosynthesis; L-isoleucine from 2-oxobutanoate: step 2/4. The protein operates within amino-acid biosynthesis; L-valine biosynthesis; L-valine from pyruvate: step 2/4. In terms of biological role, involved in the biosynthesis of branched-chain amino acids (BCAA). Catalyzes an alkyl-migration followed by a ketol-acid reduction of (S)-2-acetolactate (S2AL) to yield (R)-2,3-dihydroxy-isovalerate. In the isomerase reaction, S2AL is rearranged via a Mg-dependent methyl migration to produce 3-hydroxy-3-methyl-2-ketobutyrate (HMKB). In the reductase reaction, this 2-ketoacid undergoes a metal-dependent reduction by NADPH to yield (R)-2,3-dihydroxy-isovalerate. This is Ketol-acid reductoisomerase (NADP(+)) from Alicyclobacillus acidocaldarius subsp. acidocaldarius (strain ATCC 27009 / DSM 446 / BCRC 14685 / JCM 5260 / KCTC 1825 / NBRC 15652 / NCIMB 11725 / NRRL B-14509 / 104-IA) (Bacillus acidocaldarius).